Here is an 83-residue protein sequence, read N- to C-terminus: Small ribosomal subunit protein bS16 (83 aa).

Belongs to the bacterial ribosomal protein bS16 family.

The sequence is that of Small ribosomal subunit protein bS16 from Pseudomonas putida (strain ATCC 700007 / DSM 6899 / JCM 31910 / BCRC 17059 / LMG 24140 / F1).